We begin with the raw amino-acid sequence, 382 residues long: Galactokinase (382 aa).

34–37 (EHTD) is a binding site for substrate. 124–130 (GAGLSSS) is an ATP binding site. Serine 130 and glutamate 162 together coordinate Mg(2+). Aspartate 174 functions as the Proton acceptor in the catalytic mechanism. Tyrosine 223 serves as a coordination point for substrate.

Belongs to the GHMP kinase family. GalK subfamily.

Its subcellular location is the cytoplasm. It catalyses the reaction alpha-D-galactose + ATP = alpha-D-galactose 1-phosphate + ADP + H(+). It participates in carbohydrate metabolism; galactose metabolism. In terms of biological role, catalyzes the transfer of the gamma-phosphate of ATP to D-galactose to form alpha-D-galactose-1-phosphate (Gal-1-P). In Salmonella choleraesuis (strain SC-B67), this protein is Galactokinase.